The chain runs to 448 residues: Adenylosuccinate synthetase (448 aa).

Residues 36–42 (GDEGKGK) and 64–66 (GHT) each bind GTP. Asp-37 acts as the Proton acceptor in catalysis. Mg(2+)-binding residues include Asp-37 and Gly-64. IMP-binding positions include 37–40 (DEGK), 62–65 (NAGH), Thr-154, Arg-168, Asn-246, Thr-261, and Arg-325. His-65 serves as the catalytic Proton donor. Residue 321-327 (VTTKRKR) participates in substrate binding. Residues Arg-327, 353–355 (KLD), and 436–438 (GVG) each bind GTP.

This sequence belongs to the adenylosuccinate synthetase family. In terms of assembly, homodimer. Mg(2+) serves as cofactor.

The protein resides in the cytoplasm. It carries out the reaction IMP + L-aspartate + GTP = N(6)-(1,2-dicarboxyethyl)-AMP + GDP + phosphate + 2 H(+). It participates in purine metabolism; AMP biosynthesis via de novo pathway; AMP from IMP: step 1/2. Its function is as follows. Plays an important role in the de novo pathway and in the salvage pathway of purine nucleotide biosynthesis. Catalyzes the first committed step in the biosynthesis of AMP from IMP. In Drosophila virilis (Fruit fly), this protein is Adenylosuccinate synthetase.